Reading from the N-terminus, the 171-residue chain is Adenine phosphoribosyltransferase (171 aa).

It belongs to the purine/pyrimidine phosphoribosyltransferase family. As to quaternary structure, homodimer.

It is found in the cytoplasm. The catalysed reaction is AMP + diphosphate = 5-phospho-alpha-D-ribose 1-diphosphate + adenine. It participates in purine metabolism; AMP biosynthesis via salvage pathway; AMP from adenine: step 1/1. Catalyzes a salvage reaction resulting in the formation of AMP, that is energically less costly than de novo synthesis. The chain is Adenine phosphoribosyltransferase from Shouchella clausii (strain KSM-K16) (Alkalihalobacillus clausii).